A 295-amino-acid polypeptide reads, in one-letter code: Guided entry of tail-anchored proteins factor CAMLG (295 aa).

Disordered stretches follow at residues 1–73 (MEPM…ILNP) and 127–148 (GVEL…RGSH). The Cytoplasmic segment spans residues 1-188 (MEPMPSATDG…RTTEEFDSFR (188 aa)). Polar residues predominate over residues 15–24 (ATPSGLSASQ). Residue serine 53 is modified to Phosphoserine. Residues 127–138 (GVELRQRNRGDL) show a composition bias toward basic and acidic residues. A helical membrane pass occupies residues 189–206 (IFRLVGCALLALVVRAFV). The Lumenal portion of the chain corresponds to 207–208 (CK). An intrachain disulfide couples cysteine 207 to cysteine 283. The chain crosses the membrane as a helical span at residues 209 to 227 (YLSIFAPFLTLQLAYMGLY). At 228-268 (KYFPKGEKKVKTTVLTAALLLSGIPAEVINRSMDTYSKMGE) the chain is on the cytoplasmic side. A helical membrane pass occupies residues 269 to 287 (VFTDLCVYFFTFIFCHEVL). The Lumenal portion of the chain corresponds to 288-295 (EYWGPEVP).

In terms of assembly, component of the Golgi to ER traffic (GET) complex, which is composed of GET1/WRB, CAMLG/GET2 and GET3/TRC40. Within the complex, GET1 and CAMLG form a heterotetramer which is stabilized by phosphatidylinositol binding and which binds to the GET3 homodimer. Interacts (via C-terminus) with GET1. Interacts (via N-terminus) with GET3. GET3 shows a higher affinity for CAMLG than for GET1. Interacts (via N-terminus) with TNFRSF13B/TACI (via C-terminus). In the central nervous system, expressed in astrocytes, microglia and neurons (at protein level).

It localises to the endoplasmic reticulum membrane. Required for the post-translational delivery of tail-anchored (TA) proteins to the endoplasmic reticulum. Together with GET1/WRB, acts as a membrane receptor for soluble GET3/TRC40, which recognizes and selectively binds the transmembrane domain of TA proteins in the cytosol. Required for the stability of GET1. Stimulates calcium signaling in T cells through its involvement in elevation of intracellular calcium. Essential for the survival of peripheral follicular B cells. In Rattus norvegicus (Rat), this protein is Guided entry of tail-anchored proteins factor CAMLG.